The chain runs to 206 residues: Ancillary SecYEG translocon subunit (206 aa).

Residues Met1–Lys23 lie on the Cytoplasmic side of the membrane. A helical transmembrane segment spans residues Ala24–Asn43. The Periplasmic portion of the chain corresponds to Ser44–Ile206.

This sequence belongs to the YfgM family. In terms of assembly, interacts with the SecYEG translocon. Forms a complex with PpiD. Also interacts with RcsB.

Its subcellular location is the cell inner membrane. Its activity is regulated as follows. Is stable during exponential growth and degraded in stationary phase by the essential FtsH protease. Degradation is influenced by the alarmone (p)ppGpp, but not by inorganic polyphosphate (polyP), RpoS, RcsB or PpiD. In terms of biological role, may mediate protein transfer from the SecYEG translocon to the periplasmic chaperone network via its periplasmic C-terminal region. In addition, at the cytosolic site, acts as a negative regulator of RcsB. In stationary phase, the FtsH-dependent degradation of YfgM ensures the release of RcsB from YfgM and thereby permits cellular protection by the Rcs phosphorelay system. May coordinate stress responses across the inner membrane via a dynamic protein-protein interaction network inside and outside of the membrane. The chain is Ancillary SecYEG translocon subunit (yfgM) from Escherichia coli (strain K12).